Here is a 49-residue protein sequence, read N- to C-terminus: Small ribosomal subunit protein eS31 (49 aa).

Residues Cys-21, Cys-24, Cys-39, and Cys-42 each contribute to the Zn(2+) site. The segment at 21 to 42 adopts a C4-type zinc-finger fold; the sequence is CPRCGPGVFLADHKNRLACGKC.

It belongs to the eukaryotic ribosomal protein eS31 family. Part of the 30S ribosomal subunit. Requires Zn(2+) as cofactor.

The sequence is that of Small ribosomal subunit protein eS31 from Methanosarcina mazei (strain ATCC BAA-159 / DSM 3647 / Goe1 / Go1 / JCM 11833 / OCM 88) (Methanosarcina frisia).